Here is a 76-residue protein sequence, read N- to C-terminus: Protein MATERNALLY EXPRESSED GENE 4 (76 aa).

Residues 1 to 27 (MEYRKRVDALVFFSLLLLGYFAAHAHG) form the signal peptide. Cys53 and Cys75 form a disulfide bridge.

The protein belongs to the MEG family. Expressed exclusively in endosperm.

This chain is Protein MATERNALLY EXPRESSED GENE 4 (MEG4), found in Zea mays (Maize).